Consider the following 365-residue polypeptide: Ribosomal RNA large subunit methyltransferase F (365 aa).

Low complexity-rich tracts occupy residues 1–18 (MPKP…SPAG) and 30–42 (AKLK…AASK). Residues 1-50 (MPKPAIKTAAKPATSPAGKRAKPNTPQSVAKLKASTAKAASKPKAKLGEK) form a disordered region.

This sequence belongs to the methyltransferase superfamily. METTL16/RlmF family.

It is found in the cytoplasm. It catalyses the reaction adenosine(1618) in 23S rRNA + S-adenosyl-L-methionine = N(6)-methyladenosine(1618) in 23S rRNA + S-adenosyl-L-homocysteine + H(+). In terms of biological role, specifically methylates the adenine in position 1618 of 23S rRNA. The sequence is that of Ribosomal RNA large subunit methyltransferase F from Shewanella oneidensis (strain ATCC 700550 / JCM 31522 / CIP 106686 / LMG 19005 / NCIMB 14063 / MR-1).